A 944-amino-acid chain; its full sequence is Protein unc-45 homolog A (944 aa).

Residues 1–25 (MTVSGPGTPEPRPSDPGASSAEELR) form a disordered region. 3 TPR repeats span residues 21-54 (AEEL…GATP), 58-91 (AILH…DGGD), and 92-125 (VKAL…EPKN). At K70 the chain carries N6-acetyllysine. K483 carries the N6-acetyllysine modification.

In terms of assembly, interacts with PGR isoforms A and B as well as with NR3C1 in the absence of ligand, and with HSP90AB1. Binding to HSP90AB1 involves 2 UNC45A monomers per HSP90AB1 dimer.

It localises to the cytoplasm. The protein localises to the perinuclear region. Its subcellular location is the nucleus. May act as co-chaperone for HSP90 (Potential). Prevents the stimulation of HSP90AB1 ATPase activity by AHSA1. Positive factor in promoting PGR function in the cell. May be necessary for proper folding of myosin (Potential). Necessary for normal cell proliferation. Necessary for normal myotube formation and myosin accumulation during muscle cell development. May play a role in erythropoiesis in stroma cells in the spleen. The chain is Protein unc-45 homolog A (Unc45a) from Rattus norvegicus (Rat).